Reading from the N-terminus, the 131-residue chain is Large ribosomal subunit protein bL19 (131 aa).

The protein belongs to the bacterial ribosomal protein bL19 family.

This protein is located at the 30S-50S ribosomal subunit interface and may play a role in the structure and function of the aminoacyl-tRNA binding site. The sequence is that of Large ribosomal subunit protein bL19 from Rhodopseudomonas palustris (strain HaA2).